We begin with the raw amino-acid sequence, 1173 residues long: WASH complex subunit 4 (1173 aa).

Residue Ala2 is modified to N-acetylalanine. Phosphoserine is present on Ser7. A sufficient for interaction with WASHC5 region spans residues 705–1173 (KDLALFFSLN…STVSADPVVK (469 aa)). A coiled-coil region spans residues 1135 to 1161 (RADKTAAEENQEKKEKEEETKTSNGDL). The segment covering 1142–1155 (EENQEKKEKEEETK) has biased composition (basic and acidic residues). The disordered stretch occupies residues 1142–1173 (EENQEKKEKEEETKTSNGDLSDSTVSADPVVK). The residue at position 1154 (Thr1154) is a Phosphothreonine. Polar residues predominate over residues 1157-1167 (SNGDLSDSTVS).

This sequence belongs to the SWIP family. In terms of assembly, component of the WASH core complex also described as WASH regulatory complex (SHRC) composed of WASH (WASHC1, WASH2P or WASH3P), WASHC2 (WASHC2A or WASHC2C), WASHC3, WASHC4 and WASHC5. The WASH core complex associates via WASHC2 with the F-actin-capping protein dimer (formed by CAPZA1, CAPZA2 or CAPZA3 and CAPZB) in a transient or substoichiometric manner which was initially described as WASH complex.

Its subcellular location is the early endosome. In terms of biological role, acts as a component of the WASH core complex that functions as a nucleation-promoting factor (NPF) at the surface of endosomes, where it recruits and activates the Arp2/3 complex to induce actin polymerization, playing a key role in the fission of tubules that serve as transport intermediates during endosome sorting. This Homo sapiens (Human) protein is WASH complex subunit 4.